A 466-amino-acid chain; its full sequence is Chromosomal replication initiator protein DnaA (466 aa).

The segment at 1 to 86 is domain I, interacts with DnaA modulators; that stretch reads MSLSLWQQCL…EVGTKPVTQT (86 aa). The interval 86 to 129 is domain II; the sequence is TLKTPVHNVVAPTQTTTAQPQRVAPAARSGWDNVPAPAEPTYRS. The segment at 130 to 346 is domain III, AAA+ region; sequence NVNVKHTFDN…GALNRVIANA (217 aa). 4 residues coordinate ATP: Gly174, Gly176, Lys177, and Thr178. The domain IV, binds dsDNA stretch occupies residues 347 to 466; that stretch reads NFTGRAITID…FSNLIRTLSS (120 aa).

The protein belongs to the DnaA family. In terms of assembly, oligomerizes as a right-handed, spiral filament on DNA at oriC.

It localises to the cytoplasm. Functionally, plays an essential role in the initiation and regulation of chromosomal replication. ATP-DnaA binds to the origin of replication (oriC) to initiate formation of the DNA replication initiation complex once per cell cycle. Binds the DnaA box (a 9 base pair repeat at the origin) and separates the double-stranded (ds)DNA. Forms a right-handed helical filament on oriC DNA; dsDNA binds to the exterior of the filament while single-stranded (ss)DNA is stabiized in the filament's interior. The ATP-DnaA-oriC complex binds and stabilizes one strand of the AT-rich DNA unwinding element (DUE), permitting loading of DNA polymerase. After initiation quickly degrades to an ADP-DnaA complex that is not apt for DNA replication. Binds acidic phospholipids. The protein is Chromosomal replication initiator protein DnaA of Salmonella enteritidis PT4 (strain P125109).